A 543-amino-acid polypeptide reads, in one-letter code: Zinc finger CCCH-type with G patch domain-containing protein (543 aa).

Disordered stretches follow at residues 55–79 and 95–132; these read AATS…DNPI and TEDS…DKLD. A compositionally biased stretch (low complexity) spans 65–76; that stretch reads DTAGRAPPATAD. Residues 118–131 show a composition bias toward acidic residues; the sequence is DDDADNDDDADDKL. The segment at 186-209 adopts a C3H1-type zinc-finger fold; it reads PCAYFLEGECRFTDEKCRYSHGEV. Residues 272-304 are disordered; the sequence is PFEDLLPLDEDEDGQEAAEDSESDTDGADEEEA. The segment covering 277 to 304 has biased composition (acidic residues); that stretch reads LPLDEDEDGQEAAEDSESDTDGADEEEA. Residues 335–381 enclose the G-patch domain; sequence TRGIGSKIMQKMGYIVGTGLGREGEGIVVPVSAQVLPQGRSLDYCME. The interval 438–460 is disordered; sequence GAAGGESSRPNRNRPGALSRQEL.

It is found in the nucleus. Functionally, transcription repressor. This chain is Zinc finger CCCH-type with G patch domain-containing protein, found in Anopheles gambiae (African malaria mosquito).